A 1240-amino-acid chain; its full sequence is Phospholipid-transporting ATPase 6 (1240 aa).

Residues 1–75 (MARRRIRSRI…TTRYNLLTFL (75 aa)) are Cytoplasmic-facing. The chain crosses the membrane as a helical span at residues 76–97 (PKCLYEQFHRVANFYFLVAAIL). Residues 98-101 (SVFP) lie on the Extracellular side of the membrane. Residues 102–124 (LSPFNKWSMIAPLVFVVGLSMGK) traverse the membrane as a helical segment. Over 125 to 306 (EALEDWRRFM…SRIEKRMDYI (182 aa)) the chain is Cytoplasmic. A helical membrane pass occupies residues 307-328 (IYTLFALLLTVSFISSLGFAVM). At 329–360 (TKLLMAEWWYLRPDKPESLTNPTNPLYAWVVH) the chain is on the extracellular side. A helical membrane pass occupies residues 361–378 (LITALLLYGYLIPISLYV). The Cytoplasmic segment spans residues 379–943 (SIEVVKVLQA…HGHWCYKRIA (565 aa)). The 4-aspartylphosphate intermediate role is filled by aspartate 426. Lysine 625 participates in a covalent cross-link: Glycyl lysine isopeptide (Lys-Gly) (interchain with G-Cter in ubiquitin). Residues aspartate 888 and aspartate 892 each contribute to the Mg(2+) site. A helical membrane pass occupies residues 944-963 (QMICYFFYKNITFGLTLFYF). The Extracellular portion of the chain corresponds to 964 to 977 (ECFTGFSGQSIYND). Residues 978 to 997 (SYLLLFNVVLTSLPVISLGV) traverse the membrane as a helical segment. Topologically, residues 998–1027 (FEQDVPSDVCLQFPALYQQGPKNLFFDWYR) are cytoplasmic. A helical transmembrane segment spans residues 1028–1050 (ILGWMGNGVYASIVIFTLNLGIF). Topologically, residues 1051-1063 (HVQSFRSDGQTAD) are extracellular. Residues 1064 to 1086 (MNAMGTAMFTCIIWAVNVQIALT) form a helical membrane-spanning segment. Residues 1087–1092 (MSHFTW) are Cytoplasmic-facing. The chain crosses the membrane as a helical span at residues 1093-1113 (IQHVMIWGSIGAWYVFLALYG). At 1114 to 1130 (MLPVKLSGNIFHMLVEI) the chain is on the extracellular side. Residues 1131–1155 (LAPAPIFWLTSLLVIAATTLPYLFH) form a helical membrane-spanning segment. The Cytoplasmic portion of the chain corresponds to 1156–1240 (ISYQRSVNPL…SNDTPSSNSQ (85 aa)).

It belongs to the cation transport ATPase (P-type) (TC 3.A.3) family. Type IV subfamily.

It is found in the cell membrane. The protein localises to the endomembrane system. The catalysed reaction is ATP + H2O + phospholipidSide 1 = ADP + phosphate + phospholipidSide 2.. Its function is as follows. Involved in transport of phospholipids and in regulation of pollen plasma membrane lipid asymmetry. This Arabidopsis thaliana (Mouse-ear cress) protein is Phospholipid-transporting ATPase 6.